A 189-amino-acid polypeptide reads, in one-letter code: Elongation factor P (189 aa).

This sequence belongs to the elongation factor P family.

It is found in the cytoplasm. The protein operates within protein biosynthesis; polypeptide chain elongation. Involved in peptide bond synthesis. Stimulates efficient translation and peptide-bond synthesis on native or reconstituted 70S ribosomes in vitro. Probably functions indirectly by altering the affinity of the ribosome for aminoacyl-tRNA, thus increasing their reactivity as acceptors for peptidyl transferase. This Chloroflexus aurantiacus (strain ATCC 29364 / DSM 637 / Y-400-fl) protein is Elongation factor P.